Reading from the N-terminus, the 183-residue chain is MKKKTTLSEEDQALFRQLMAGTRKIKQDTIVHRPQRKKISEVPVKRLIQEQADASHYFSDEFQPLLNTEGPVKYVRPDVSHFEAKKLRRGDYSPELFLDLHGLTQLQAKQELGALIAACRREHVFCACVMHGHGKHILKQQTPLWLAQHPHVMAFHQAPKVYGGDAALLVLIEVDEWLPPELP.

A Smr domain is found at 98–173; that stretch reads LDLHGLTQLQ…GDAALLVLIE (76 aa).

This sequence belongs to the SmrB family. In terms of assembly, associates with collided ribosomes, but not with correctly translating polysomes.

Its function is as follows. Acts as a ribosome collision sensor. Detects stalled/collided disomes (pairs of ribosomes where the leading ribosome is stalled and a second ribosome has collided with it) and endonucleolytically cleaves mRNA at the 5' boundary of the stalled ribosome. Stalled/collided disomes form a new interface (primarily via the 30S subunits) that binds SmrB. Cleaved mRNA becomes available for tmRNA ligation, leading to ribosomal subunit dissociation and rescue of stalled ribosomes. The protein is Ribosome rescue factor SmrB of Escherichia coli O7:K1 (strain IAI39 / ExPEC).